Consider the following 171-residue polypeptide: Small ribosomal subunit protein uS4 (171 aa).

The S4 RNA-binding domain occupies 103–167 (RRLQTLVHKR…SPMKKQIEAA (65 aa)).

It belongs to the universal ribosomal protein uS4 family. In terms of assembly, part of the 30S ribosomal subunit. Contacts protein S5. The interaction surface between S4 and S5 is involved in control of translational fidelity.

One of the primary rRNA binding proteins, it binds directly to 16S rRNA where it nucleates assembly of the body of the 30S subunit. In terms of biological role, with S5 and S12 plays an important role in translational accuracy. In Methanothermobacter thermautotrophicus (strain ATCC 29096 / DSM 1053 / JCM 10044 / NBRC 100330 / Delta H) (Methanobacterium thermoautotrophicum), this protein is Small ribosomal subunit protein uS4.